The primary structure comprises 201 residues: MSRYRGPRLKKIRRLGALPGLTRKTPKSGSNLKKKFNSGKKEQYRIRLQEKQKLRFHYGLTERQLLRYVHIAGKAKRSTGQVLLQLLEMRLDNILFRLGMASTIPGARQLVNHRHILVNGRIVNIPSFRCKPRDIITTKDNQRSKGLVQNYIASSDPGKLPKHLAIDTLEYKGLVNKILDRKWVGLKINELLVVEYYSRQT.

Residues 89-157 (MRLDNILFRL…VQNYIASSDP (69 aa)) enclose the S4 RNA-binding domain.

It belongs to the universal ribosomal protein uS4 family. Part of the 30S ribosomal subunit. Contacts protein S5. The interaction surface between S4 and S5 is involved in control of translational fidelity.

Its subcellular location is the plastid. It localises to the chloroplast. In terms of biological role, one of the primary rRNA binding proteins, it binds directly to 16S rRNA where it nucleates assembly of the body of the 30S subunit. Its function is as follows. With S5 and S12 plays an important role in translational accuracy. In Triticum aestivum (Wheat), this protein is Small ribosomal subunit protein uS4c (rps4).